Here is a 176-residue protein sequence, read N- to C-terminus: Disulfide bond formation protein B (176 aa).

At 1-14 (MLRFLNQCSQGRGA) the chain is on the cytoplasmic side. A helical membrane pass occupies residues 15–31 (WLLMAFTALALELTALW). The Periplasmic segment spans residues 32 to 49 (FQHVMLLKPCVLCIYERC). The cysteines at positions 41 and 44 are disulfide-linked. A helical membrane pass occupies residues 50 to 65 (ALFGVLGAALIGAIAP). Over 66–71 (KTPLRY) the chain is Cytoplasmic. The helical transmembrane segment at 72–89 (VAMVIWLYSAFRGVQLTY) threads the bilayer. The Periplasmic segment spans residues 90–144 (EHTMLQLYPSPFATCDFMVRFPEWLPLDKWVPQVFVASGDCAERQWDFLGMEMPQ). Residues C104 and C130 are joined by a disulfide bond. The chain crosses the membrane as a helical span at residues 145–163 (WLLGIFIAYLIVAVLVVIS). The Cytoplasmic segment spans residues 164-176 (QPFKAKKRDLFGR).

It belongs to the DsbB family.

It localises to the cell inner membrane. Functionally, required for disulfide bond formation in some periplasmic proteins such as PhoA or OmpA. Acts by oxidizing the DsbA protein. The protein is Disulfide bond formation protein B of Shigella flexneri.